Here is a 218-residue protein sequence, read N- to C-terminus: Claudin-5 (218 aa).

Topologically, residues 1–7 are cytoplasmic; sequence MGSAALE. Residues 8–28 form a helical membrane-spanning segment; the sequence is ILGLVLCLVGWVGLILACGLP. At 29–81 the chain is on the extracellular side; sequence MWQVTAFLDHNIVTAQTTWKGLWMSCVVQSTGHMQCKVYESVLALSAEVQAAR. Residues 82–102 form a helical membrane-spanning segment; it reads ALTVGAVLLALVALFVTLTGA. Over 103–123 the chain is Cytoplasmic; sequence QCTTCVAPGPVKARVALTGGA. The chain crosses the membrane as a helical span at residues 124–144; the sequence is LYAVCGLLALVPLCWFANIVV. Topologically, residues 145–160 are extracellular; it reads REFYDPTVPVSQKYEL. A helical transmembrane segment spans residues 161–181; it reads GAALYIGWAASALLMCGGGLV. Over 182 to 218 the chain is Cytoplasmic; the sequence is CCGAWVCTGRPEFSFPVKYSAPRRPTANGDYDKKNYV. The tract at residues 217-218 is interactions with TJP1, TJP2 and TJP3; sequence YV.

This sequence belongs to the claudin family. As to quaternary structure, interacts with MPDZ. Directly interacts with TJP1/ZO-1, TJP2/ZO-2 and TJP3/ZO-3. As to expression, widely expressed with highest levels in the lung.

The protein localises to the cell junction. The protein resides in the tight junction. Its subcellular location is the cell membrane. Plays a major role in tight junction-specific obliteration of the intercellular space, through calcium-independent cell-adhesion activity. The sequence is that of Claudin-5 (Cldn5) from Mus musculus (Mouse).